Consider the following 463-residue polypeptide: Glutamate--tRNA ligase 1 (463 aa).

The 'HIGH' region motif lies at 11–21; it reads PSPTGYLHIGG. The 'KMSKS' region signature appears at 240–244; the sequence is KLSKR. Position 243 (Lys-243) interacts with ATP.

The protein belongs to the class-I aminoacyl-tRNA synthetase family. Glutamate--tRNA ligase type 1 subfamily. Monomer.

It is found in the cytoplasm. It catalyses the reaction tRNA(Glu) + L-glutamate + ATP = L-glutamyl-tRNA(Glu) + AMP + diphosphate. Its function is as follows. Catalyzes the attachment of glutamate to tRNA(Glu) in a two-step reaction: glutamate is first activated by ATP to form Glu-AMP and then transferred to the acceptor end of tRNA(Glu). The chain is Glutamate--tRNA ligase 1 from Campylobacter jejuni subsp. doylei (strain ATCC BAA-1458 / RM4099 / 269.97).